Reading from the N-terminus, the 478-residue chain is Vitronectin (478 aa).

The N-terminal stretch at 1-19 (MAPLRPLLILALLAWVALA) is a signal peptide. Positions 20–63 (DQESCKGRCTEGFNVDKKCQCDELCSYYQSCCTDYTAECKPQVT) constitute an SMB domain. 7 disulfides stabilise this stretch: cysteine 24/cysteine 28, cysteine 24/cysteine 40, cysteine 28/cysteine 58, cysteine 38/cysteine 40, cysteine 38/cysteine 51, cysteine 44/cysteine 50, and cysteine 51/cysteine 58. Positions 64–66 (RGD) match the Cell attachment site motif. A Phosphothreonine; by CK2; in vitro modification is found at threonine 69. Tyrosine 75 bears the Sulfotyrosine mark. Threonine 76 bears the Phosphothreonine; by CK2; in vitro mark. Tyrosine 78 bears the Sulfotyrosine mark. The N-linked (GlcNAc...) (complex) asparagine glycan is linked to asparagine 86. Residues 91–158 (EQVGGPSLTS…PPAEEELCSG (68 aa)) are disordered. Residues 97-112 (SLTSDLQAQSKGNPEQ) are compositionally biased toward polar residues. 2 positions are modified to phosphoserine: serine 130 and serine 137. Basic and acidic residues predominate over residues 133–143 (EGIDSRPETLH). Hemopexin repeat units lie at residues 158–202 (GKPF…VWGI), 203–250 (EGPI…FDGI), and 251–305 (PDNV…FEHF). N-linked (GlcNAc...) asparagine glycosylation occurs at asparagine 169. N-linked (GlcNAc...) (complex) asparagine glycosylation is present at asparagine 242. At tyrosine 282 the chain carries Sulfotyrosine. Cysteines 293 and 430 form a disulfide. Serine 312 is modified (phosphoserine). The segment at 362–395 (RPSLAKKQRFRHRNRKGYRSQRGHSRGRNQNSRR) is heparin-binding. The segment at 364 to 398 (SLAKKQRFRHRNRKGYRSQRGHSRGRNQNSRRPSR) is disordered. A compositionally biased stretch (basic residues) spans 365 to 388 (LAKKQRFRHRNRKGYRSQRGHSRG). The residue at position 397 (serine 397) is a Phosphoserine; by PKA. 2 positions are modified to sulfotyrosine: tyrosine 417 and tyrosine 420. A Hemopexin 4 repeat occupies 419 to 472 (DYRMDWLVPATCEPIQSVFFFSGDKYYRVNLRTRRVDTVDPPYPRSIAQYWLGC).

As to quaternary structure, exists in two forms: a single chain 75 kDa form (V75) and a clipped form composed of two chains (65 kDa and 10 kDa) (V65+V10) which are held together by a disulfide bond. Interacts with SERPINE1/PAI1, insulin and C1QBP. (Microbial infection) Interacts (via hemopexin repeat 2) with P.falciparum (isolate CDC / Honduras) SERA5 P47 (via C-terminus); may form heterotetramers of two VTN and SERA5 P47 heterodimers; the interaction may protect merozoites from phagocytosis by host monocytes; VTN glycosylation appears to be dispensable for the interaction. In terms of processing, sulfated on tyrosine residues. Post-translationally, N- and O-glycosylated. Phosphorylation on Thr-69 and Thr-76 favors cell adhesion and spreading. In terms of processing, it has been suggested that the active SMB domain may be permitted considerable disulfide bond heterogeneity or variability, thus two alternate disulfide patterns based on 3D structures are described with 1 disulfide bond conserved in both. Post-translationally, phosphorylation sites are present in the extracellular medium. As to expression, expressed in the retina pigment epithelium (at protein level). Expressed in plasma (at protein level). Expressed in serum (at protein level).

It localises to the secreted. It is found in the extracellular space. The protein localises to the parasitophorous vacuole. In terms of biological role, vitronectin is a cell adhesion and spreading factor found in serum and tissues. Vitronectin interact with glycosaminoglycans and proteoglycans. Is recognized by certain members of the integrin family and serves as a cell-to-substrate adhesion molecule. Inhibitor of the membrane-damaging effect of the terminal cytolytic complement pathway. Functionally, somatomedin-B is a growth hormone-dependent serum factor with protease-inhibiting activity. The protein is Vitronectin (VTN) of Homo sapiens (Human).